Consider the following 130-residue polypeptide: MINNVVLIGRLTKDVELRYTPSQVACAQFTLAVNRNFKNQDGQKEADFINCVIWRKSAENLSNWAKKGQLIAITGRIQTRNYENQQGQRVYVTEVVAESFQILEKRDNTANTSSLADSMPDYGPEPDLPF.

The 104-residue stretch at 1-104 (MINNVVLIGR…VVAESFQILE (104 aa)) folds into the SSB domain. Residues 108–130 (NTANTSSLADSMPDYGPEPDLPF) form a disordered region.

As to quaternary structure, homotetramer.

The sequence is that of Single-stranded DNA-binding protein 1 (ssb1) from Streptococcus pyogenes serotype M18 (strain MGAS8232).